Consider the following 170-residue polypeptide: 3-hydroxyacyl-[acyl-carrier-protein] dehydratase FabZ (170 aa).

The active site involves His66.

The protein belongs to the thioester dehydratase family. FabZ subfamily.

It localises to the cytoplasm. The catalysed reaction is a (3R)-hydroxyacyl-[ACP] = a (2E)-enoyl-[ACP] + H2O. Involved in unsaturated fatty acids biosynthesis. Catalyzes the dehydration of short chain beta-hydroxyacyl-ACPs and long chain saturated and unsaturated beta-hydroxyacyl-ACPs. This Granulibacter bethesdensis (strain ATCC BAA-1260 / CGDNIH1) protein is 3-hydroxyacyl-[acyl-carrier-protein] dehydratase FabZ.